The following is a 3674-amino-acid chain: Dystrophin-1 (3674 aa).

Positions methionine 1–proline 25 are disordered. Basic and acidic residues predominate over residues proline 11–proline 25. Residues glutamine 30–asparagine 39 form an actin-binding region. A Calponin-homology (CH) domain is found at glutamate 129–isoleucine 234. Residues serine 265–arginine 325 are disordered. Spectrin repeat units follow at residues glutamate 327–glutamine 435, glutamine 436–glycine 541, and cysteine 612–lysine 656. A compositionally biased stretch (basic and acidic residues) spans valine 655–glutamate 674. Disordered regions lie at residues valine 655–glutamate 689, asparagine 968–arginine 991, alanine 1587–serine 1606, leucine 1796–serine 1833, and methionine 2387–glycine 2466. A compositionally biased stretch (polar residues) spans glutamine 675–aspartate 685. Residues threonine 975 to arginine 991 are compositionally biased toward basic and acidic residues. Residues leucine 1796–serine 1830 show a composition bias toward basic and acidic residues. Polar residues predominate over residues glycine 2391–glutamine 2411. Spectrin repeat units follow at residues arginine 2576–alanine 2673, phenylalanine 2725–lysine 2789, glutamine 2792–lysine 2905, and glutamine 2926–asparagine 3032. The WW domain maps to glutamine 3047–tryptophan 3081. The ZZ-type zinc finger occupies lysine 3301–threonine 3357. Zn(2+)-binding residues include cysteine 3306, cysteine 3309, cysteine 3321, cysteine 3324, cysteine 3330, cysteine 3333, histidine 3343, and histidine 3347. Disordered stretches follow at residues serine 3481–glutamine 3522 and lysine 3568–asparagine 3645. The segment covering lysine 3568–leucine 3579 has biased composition (polar residues).

Component of the dystrophin glycoprotein complex (DGC). Interacts with dyb-1 and stn-1 to form the DGC. Interacts with stn-2. Expressed in body wall, head, pharyngeal and vulval muscles, from late embryogenesis to adulthood (at protein level).

The protein localises to the cell membrane. The protein resides in the sarcolemma. It localises to the cytoplasm. It is found in the cytoskeleton. Plays a role in cholinergic transmission and as a functional partner of dystrobrevin (dyb-1), necessary for muscle maintenance. Required for neuronal positioning. May play a role in the localization of slo-1 near dense bodies in the muscle. The protein is Dystrophin-1 (dys-1) of Caenorhabditis elegans.